A 348-amino-acid polypeptide reads, in one-letter code: D-erythrose-4-phosphate dehydrogenase (348 aa).

NAD(+) is bound by residues 12-13 (RI) and arginine 81. Substrate is bound by residues 154–156 (SCT), arginine 200, 213–214 (TK), and arginine 236. The Nucleophile role is filled by cysteine 155. Position 318 (asparagine 318) interacts with NAD(+).

This sequence belongs to the glyceraldehyde-3-phosphate dehydrogenase family. Epd subfamily. Homotetramer.

It localises to the cytoplasm. The enzyme catalyses D-erythrose 4-phosphate + NAD(+) + H2O = 4-phospho-D-erythronate + NADH + 2 H(+). It participates in cofactor biosynthesis; pyridoxine 5'-phosphate biosynthesis; pyridoxine 5'-phosphate from D-erythrose 4-phosphate: step 1/5. Functionally, catalyzes the NAD-dependent conversion of D-erythrose 4-phosphate to 4-phosphoerythronate. This is D-erythrose-4-phosphate dehydrogenase from Salmonella gallinarum (strain 287/91 / NCTC 13346).